Reading from the N-terminus, the 197-residue chain is Probable GTP-binding protein EngB (197 aa).

An EngB-type G domain is found at 26–197 (ELPEIALAGR…EAWDAILEKL (172 aa)). GTP contacts are provided by residues 34–41 (GRSNVGKS), 61–65 (GKTQL), 79–82 (DVPG), 146–149 (TKAD), and 178–180 (FSS). 2 residues coordinate Mg(2+): S41 and T63.

Belongs to the TRAFAC class TrmE-Era-EngA-EngB-Septin-like GTPase superfamily. EngB GTPase family. Mg(2+) is required as a cofactor.

Necessary for normal cell division and for the maintenance of normal septation. The protein is Probable GTP-binding protein EngB of Streptococcus pneumoniae (strain CGSP14).